The chain runs to 20 residues: Endo-1,6-beta-glucanase (20 aa).

Belongs to the glycosyl hydrolase 5 (cellulase A) family.

It is found in the secreted. It localises to the extracellular space. The catalysed reaction is Random hydrolysis of (1-&gt;6)-linkages in (1-&gt;6)-beta-D-glucans.. In terms of biological role, endo-1,6-beta-glucanase that has highest activity against the beta-1,6-glucan pustulan. Also active against the beta-1,6-glucan lutean. Lower activity against laminarin (beta-1,3-glucan with beta-1,6-branches). Little or no activity against gentiobiose, yeast glucan, lichenin, scleroglucan, curdlan, barley glucan, CM cellulose, HE cellulose, pachyman and pullulan. In Acremonium sp, this protein is Endo-1,6-beta-glucanase.